A 363-amino-acid chain; its full sequence is tRNA N6-adenosine threonylcarbamoyltransferase (363 aa).

The Fe cation site is built by His121 and His125. Residues 143–147 (LASGG), Asp176, Gly189, and Asn287 each bind substrate. Asp315 contacts Fe cation.

The protein belongs to the KAE1 / TsaD family. Requires Fe(2+) as cofactor.

The protein resides in the cytoplasm. The catalysed reaction is L-threonylcarbamoyladenylate + adenosine(37) in tRNA = N(6)-L-threonylcarbamoyladenosine(37) in tRNA + AMP + H(+). Functionally, required for the formation of a threonylcarbamoyl group on adenosine at position 37 (t(6)A37) in tRNAs that read codons beginning with adenine. Is involved in the transfer of the threonylcarbamoyl moiety of threonylcarbamoyl-AMP (TC-AMP) to the N6 group of A37, together with TsaE and TsaB. TsaD likely plays a direct catalytic role in this reaction. The sequence is that of tRNA N6-adenosine threonylcarbamoyltransferase from Rhodopseudomonas palustris (strain BisA53).